A 63-amino-acid chain; its full sequence is UPF0434 protein Sde_1297 (63 aa).

It belongs to the UPF0434 family.

This chain is UPF0434 protein Sde_1297, found in Saccharophagus degradans (strain 2-40 / ATCC 43961 / DSM 17024).